The following is a 223-amino-acid chain: Ribose-5-phosphate isomerase A (223 aa).

Substrate is bound by residues 29–32, 82–85, and 95–98; these read TGST, DGAD, and KGGG. Glu-104 serves as the catalytic Proton acceptor. A substrate-binding site is contributed by Lys-122.

It belongs to the ribose 5-phosphate isomerase family. In terms of assembly, homodimer.

It carries out the reaction aldehydo-D-ribose 5-phosphate = D-ribulose 5-phosphate. The protein operates within carbohydrate degradation; pentose phosphate pathway; D-ribose 5-phosphate from D-ribulose 5-phosphate (non-oxidative stage): step 1/1. Functionally, catalyzes the reversible conversion of ribose-5-phosphate to ribulose 5-phosphate. The chain is Ribose-5-phosphate isomerase A from Neisseria gonorrhoeae (strain ATCC 700825 / FA 1090).